Consider the following 236-residue polypeptide: uncharacterized protein (236 aa).

Positions Met-1 to Ala-22 are cleaved as a signal peptide.

This is an uncharacterized protein from Pasteurella multocida (strain Pm70).